Here is a 304-residue protein sequence, read N- to C-terminus: D-alanine--D-alanine ligase (304 aa).

An ATP-grasp domain is found at 103–299 (KLIWQALGLP…FADLCIEILK (197 aa)). 129 to 184 (EEKLGLPMFVKPAAEGSSVGVVKVKGKGRLKSVYEELKHFQGEIIAERFIGGGEYS) is a binding site for ATP. Positions 253, 266, and 268 each coordinate Mg(2+).

This sequence belongs to the D-alanine--D-alanine ligase family. It depends on Mg(2+) as a cofactor. Mn(2+) serves as cofactor.

It localises to the cytoplasm. It catalyses the reaction 2 D-alanine + ATP = D-alanyl-D-alanine + ADP + phosphate + H(+). The protein operates within cell wall biogenesis; peptidoglycan biosynthesis. Its function is as follows. Cell wall formation. This is D-alanine--D-alanine ligase from Neisseria meningitidis serogroup A / serotype 4A (strain DSM 15465 / Z2491).